Reading from the N-terminus, the 470-residue chain is MTPFMTEDFLLDTEFARRLYHEYAKDQPIFDYHCHLPPQQIAEDYRFKNLYDIWLKGDHYKWRAMRTNGVAERLCTGDASDREKFDAWAATVPHTIGNPLYHWTHLELRRPFGITGKLLSPSTADEIWNQCNELLAQDNFSARGIMQQMNVKMVGTTDDPIDSLEHHAEIAKDGSFTIKVLPSWRPDKAFNIEQATFNDYMAKLGEVSDTDIRRFADLQTALTKRLDHFAAHGCKVSDHALDVVMFAEANEAELDSILARRLAGETLSEHEVAQFKTAVLVFLGAEYARRGWVQQYHIGALRNNNLRQFKLLGPDVGFDSINDRPMAEELSKLLSKQNEENLLPKTILYCLNPRDNEVLGTMIGNFQGEGMPGKMQFGSGWWFNDQKDGMERQMTQLAQLGLLSRFVGMLTDSRSFLSYTRHEYFRRILCQMIGRWVEAGEAPADINLLGEMVKNICFNNARDYFAIELN.

This sequence belongs to the metallo-dependent hydrolases superfamily. Uronate isomerase family.

It carries out the reaction D-glucuronate = D-fructuronate. It catalyses the reaction aldehydo-D-galacturonate = keto-D-tagaturonate. Its pathway is carbohydrate metabolism; pentose and glucuronate interconversion. The protein is Uronate isomerase of Escherichia fergusonii (strain ATCC 35469 / DSM 13698 / CCUG 18766 / IAM 14443 / JCM 21226 / LMG 7866 / NBRC 102419 / NCTC 12128 / CDC 0568-73).